The sequence spans 274 residues: Bis(5'-nucleosyl)-tetraphosphatase, symmetrical (274 aa).

This sequence belongs to the Ap4A hydrolase family.

It carries out the reaction P(1),P(4)-bis(5'-adenosyl) tetraphosphate + H2O = 2 ADP + 2 H(+). In terms of biological role, hydrolyzes diadenosine 5',5'''-P1,P4-tetraphosphate to yield ADP. The chain is Bis(5'-nucleosyl)-tetraphosphatase, symmetrical from Shewanella baltica (strain OS223).